The following is a 603-amino-acid chain: UvrABC system protein C (603 aa).

The GIY-YIG domain maps to 15 to 92; it reads DQPGCYLMKD…IKKHDPRFNI (78 aa). A UVR domain is found at 197–232; the sequence is KTVKNDLMKKMQEAAENMEFEKAGEFRDQINAIETT.

It belongs to the UvrC family. In terms of assembly, interacts with UvrB in an incision complex.

The protein localises to the cytoplasm. Its function is as follows. The UvrABC repair system catalyzes the recognition and processing of DNA lesions. UvrC both incises the 5' and 3' sides of the lesion. The N-terminal half is responsible for the 3' incision and the C-terminal half is responsible for the 5' incision. The chain is UvrABC system protein C from Listeria monocytogenes serotype 4a (strain HCC23).